Here is a 366-residue protein sequence, read N- to C-terminus: Protein BIG GRAIN 1-like B (366 aa).

Disordered regions lie at residues 42–73 (DSST…DFNR) and 129–148 (FERS…EHGS). Residues 56-73 (QNREDTRVSANRRDDFNR) are compositionally biased toward basic and acidic residues.

The protein belongs to the BIG GRAIN 1 (BG1) plant protein family.

The protein localises to the cell membrane. Its function is as follows. Involved in auxin transport. Regulator of the auxin signaling pathway. The protein is Protein BIG GRAIN 1-like B of Arabidopsis thaliana (Mouse-ear cress).